We begin with the raw amino-acid sequence, 229 residues long: Uracil-DNA glycosylase (229 aa).

Aspartate 65 functions as the Proton acceptor in the catalytic mechanism.

It belongs to the uracil-DNA glycosylase (UDG) superfamily. UNG family.

It localises to the cytoplasm. The catalysed reaction is Hydrolyzes single-stranded DNA or mismatched double-stranded DNA and polynucleotides, releasing free uracil.. Excises uracil residues from the DNA which can arise as a result of misincorporation of dUMP residues by DNA polymerase or due to deamination of cytosine. In Limosilactobacillus fermentum (strain NBRC 3956 / LMG 18251) (Lactobacillus fermentum), this protein is Uracil-DNA glycosylase.